Reading from the N-terminus, the 136-residue chain is Nucleoside diphosphate kinase (136 aa).

ATP is bound by residues Lys10, Phe58, Arg86, Thr92, Arg104, and Asn114. The active-site Pros-phosphohistidine intermediate is the His117.

Belongs to the NDK family. As to quaternary structure, homotetramer. The cofactor is Mg(2+).

It localises to the cytoplasm. It catalyses the reaction a 2'-deoxyribonucleoside 5'-diphosphate + ATP = a 2'-deoxyribonucleoside 5'-triphosphate + ADP. The enzyme catalyses a ribonucleoside 5'-diphosphate + ATP = a ribonucleoside 5'-triphosphate + ADP. Major role in the synthesis of nucleoside triphosphates other than ATP. The ATP gamma phosphate is transferred to the NDP beta phosphate via a ping-pong mechanism, using a phosphorylated active-site intermediate. This chain is Nucleoside diphosphate kinase, found in Mycolicibacterium vanbaalenii (strain DSM 7251 / JCM 13017 / BCRC 16820 / KCTC 9966 / NRRL B-24157 / PYR-1) (Mycobacterium vanbaalenii).